We begin with the raw amino-acid sequence, 180 residues long: MANRLKEKYTNEVIPALTEKFNYTSVMAVPKVEKIVLNMGVGDAVSNAKNLEKAAAELALISGQKPLITKAKKSIAGFRLREGVAIGAKVTLRGERMYEFLDKLVSVSLPRVRDFHGVPTKSFDGRGNYTLGVKEQLIFPEINFDDVDKVRGLDIVIVTTANTDEESRELLKGLGMPFAK.

Belongs to the universal ribosomal protein uL5 family. In terms of assembly, part of the 50S ribosomal subunit; part of the 5S rRNA/L5/L18/L25 subcomplex. Contacts the 5S rRNA and the P site tRNA. Forms a bridge to the 30S subunit in the 70S ribosome.

This is one of the proteins that bind and probably mediate the attachment of the 5S RNA into the large ribosomal subunit, where it forms part of the central protuberance. In the 70S ribosome it contacts protein S13 of the 30S subunit (bridge B1b), connecting the 2 subunits; this bridge is implicated in subunit movement. Contacts the P site tRNA; the 5S rRNA and some of its associated proteins might help stabilize positioning of ribosome-bound tRNAs. This is Large ribosomal subunit protein uL5 from Streptococcus equi subsp. equi (strain 4047).